The following is a 318-amino-acid chain: Malate dehydrogenase (318 aa).

Residues 10 to 15 and Asp34 contribute to the NAD(+) site; that span reads GGGQIG. Arg83 and Arg89 together coordinate substrate. NAD(+) is bound by residues Asn96 and 119 to 121; that span reads ISN. Residues Asn121 and Arg152 each contribute to the substrate site. His176 (proton acceptor) is an active-site residue.

This sequence belongs to the LDH/MDH superfamily. MDH type 3 family.

The catalysed reaction is (S)-malate + NAD(+) = oxaloacetate + NADH + H(+). Its function is as follows. Catalyzes the reversible oxidation of malate to oxaloacetate. This chain is Malate dehydrogenase, found in Geotalea daltonii (strain DSM 22248 / JCM 15807 / FRC-32) (Geobacter daltonii).